Reading from the N-terminus, the 368-residue chain is HECT-type ubiquitin ligase-interacting protein apyA (368 aa).

It belongs to the arrestin family. Interacts with hulA.

In terms of biological role, may be involved in signaling by recognizing appropriately phosphorylated substrates via its arrestin domains and then recruit a HECT-type ubiquitin ligase such as hulA, leading to ubiquitination of the substrate, providing a link between ubiquitination and phosphorylation in protein regulation and stability. This Emericella nidulans (strain FGSC A4 / ATCC 38163 / CBS 112.46 / NRRL 194 / M139) (Aspergillus nidulans) protein is HECT-type ubiquitin ligase-interacting protein apyA (apyA).